A 197-amino-acid polypeptide reads, in one-letter code: MAVTVAVGTSNPIKYRAVLRAFSRYYDVRVVMVSVDSGVGPQPSGVADVVGGALARAVRAVEKADSYFGVGVEAGPIEFPASGGYVETQVAAIVDRDCRATIGMSPSFEVDRRVLALMLDGVEMEKAVGVERHGGLGESVGFVGVATSGAVTRQDLTEHAVIMALIPRLMGYGSIATVEEIAAQAGASVECRSTRAI.

9 to 14 (TSNPIK) is a substrate binding site. Mg(2+) contacts are provided by aspartate 36 and aspartate 65.

Belongs to the YjjX NTPase family. In terms of assembly, homodimer. Mg(2+) is required as a cofactor. The cofactor is Mn(2+).

The enzyme catalyses XTP + H2O = XDP + phosphate + H(+). The catalysed reaction is ITP + H2O = IDP + phosphate + H(+). Its function is as follows. Phosphatase that hydrolyzes non-canonical purine nucleotides such as XTP and ITP to their respective diphosphate derivatives. Probably excludes non-canonical purines from DNA/RNA precursor pool, thus preventing their incorporation into DNA/RNA and avoiding chromosomal lesions. This is Probable inosine/xanthosine triphosphatase from Aeropyrum pernix (strain ATCC 700893 / DSM 11879 / JCM 9820 / NBRC 100138 / K1).